We begin with the raw amino-acid sequence, 530 residues long: Na(+)/H(+) antiporter NhaB (530 aa).

13 helical membrane passes run 13 to 33 (FLGK…IINP), 34 to 54 (FVFF…EFIF), 64 to 84 (PLQP…TSPA), 90 to 110 (LVAN…IYFM), 113 to 133 (LLLY…LLSL), 136 to 156 (CLMA…AVVI), 205 to 225 (LLMH…VGEP), 234 to 254 (AGWL…PVFM), 306 to 326 (ALIA…VGLI), 351 to 371 (EEAL…AVII), 378 to 400 (PIIS…IANG), 450 to 470 (ATPN…APLI), and 481 to 501 (ALPY…FMLL).

This sequence belongs to the NhaB Na(+)/H(+) (TC 2.A.34) antiporter family.

Its subcellular location is the cell inner membrane. It carries out the reaction 2 Na(+)(in) + 3 H(+)(out) = 2 Na(+)(out) + 3 H(+)(in). Its function is as follows. Na(+)/H(+) antiporter that extrudes sodium in exchange for external protons. The chain is Na(+)/H(+) antiporter NhaB from Photobacterium profundum (strain SS9).